Consider the following 82-residue polypeptide: DNA-directed RNA polymerase subunit Rpo5 (82 aa).

Belongs to the archaeal Rpo5/eukaryotic RPB5 RNA polymerase subunit family. In terms of assembly, part of the RNA polymerase complex.

It localises to the cytoplasm. The enzyme catalyses RNA(n) + a ribonucleoside 5'-triphosphate = RNA(n+1) + diphosphate. DNA-dependent RNA polymerase (RNAP) catalyzes the transcription of DNA into RNA using the four ribonucleoside triphosphates as substrates. In Thermococcus onnurineus (strain NA1), this protein is DNA-directed RNA polymerase subunit Rpo5.